A 336-amino-acid chain; its full sequence is Large ribosomal subunit protein uL3 (336 aa).

3 disordered regions span residues 1-43, 205-230, and 311-336; these read MPQP…QGFA, ITKG…HARQ, and RPAV…SNQG. Over residues 219-230 the composition is skewed to basic residues; that stretch reads GVQKRKGKHARQ.

Belongs to the universal ribosomal protein uL3 family. In terms of assembly, part of the 50S ribosomal subunit. Forms a cluster with proteins L14 and L24e.

Functionally, one of the primary rRNA binding proteins, it binds directly near the 3'-end of the 23S rRNA, where it nucleates assembly of the 50S subunit. The sequence is that of Large ribosomal subunit protein uL3 from Natronomonas pharaonis (strain ATCC 35678 / DSM 2160 / CIP 103997 / JCM 8858 / NBRC 14720 / NCIMB 2260 / Gabara) (Halobacterium pharaonis).